Here is a 589-residue protein sequence, read N- to C-terminus: Guanylate-binding protein 2 (589 aa).

Residues 1-309 form a GTPase domain (Globular) region; it reads MASEIHMLQP…GAISSGSLPC (309 aa). A GB1/RHD3-type G domain is found at 35–276; it reads NQPVVVVAIV…FTSYIFSYSA (242 aa). Residues 45–52, 181–182, and Leu-245 contribute to the GTP site; these read GLYRTGKS and RD. Cysteine methyl ester is present on Cys-586. Cys-586 carries the S-geranylgeranyl cysteine lipid modification. Positions 587–589 are cleaved as a propeptide — removed in mature form; the sequence is TIL.

This sequence belongs to the TRAFAC class dynamin-like GTPase superfamily. GB1/RHD3 GTPase family. GB1 subfamily. Homodimer; homodimerization occurs upon GTP-binding and is required for the association with membranous structures. Heterodimer with other family members, including GBP1, GBP3, GBP4 and GBP5. In terms of processing, isoprenylation is required for proper subcellular location. In terms of tissue distribution, widely expressed.

The protein resides in the cytoplasmic vesicle membrane. The protein localises to the golgi apparatus membrane. Its subcellular location is the cytoplasm. It is found in the perinuclear region. It catalyses the reaction GTP + H2O = GDP + phosphate + H(+). In terms of biological role, interferon (IFN)-inducible GTPase that plays important roles in innate immunity against a diverse range of bacterial, viral and protozoan pathogens. Hydrolyzes GTP to GMP in 2 consecutive cleavage reactions, but the major reaction product is GDP. Following infection, recruited to the pathogen-containing vacuoles or vacuole-escaped bacteria and acts as a positive regulator of inflammasome assembly by promoting the release of inflammasome ligands from bacteria. Acts by promoting lysis of pathogen-containing vacuoles, releasing pathogens into the cytosol. Following pathogen release in the cytosol, promotes recruitment of proteins that mediate bacterial cytolysis: this liberates ligands that are detected by inflammasomes, such as lipopolysaccharide (LPS) that activates the non-canonical CASP4/CASP11 inflammasome or double-stranded DNA (dsDNA) that activates the AIM2 inflammasome. Confers protection to the protozoan pathogen Toxoplasma gondii. Independently of its GTPase activity, acts as an inhibitor of various viruses infectivity by inhibiting FURIN-mediated maturation of viral envelope proteins. This Rattus norvegicus (Rat) protein is Guanylate-binding protein 2 (Gbp2).